Reading from the N-terminus, the 557-residue chain is Acid-sensing ion channel 1B (557 aa).

Residues 1-98 lie on the Cytoplasmic side of the membrane; it reads MVRITCTISF…SIRQGLWALV (98 aa). The segment covering 36–45 has biased composition (basic and acidic residues); it reads KDGEQGKYQE. Residues 36–57 form a disordered region; sequence KDGEQGKYQEEGDDPDAYDGPE. Over residues 46–57 the composition is skewed to acidic residues; the sequence is EGDDPDAYDGPE. The helical transmembrane segment at 99 to 115 threads the bilayer; sequence FLLAISMFLLQVVDRVI. The Extracellular segment spans residues 116–460; sequence YYLQYDYVTL…ETIEQKKAYE (345 aa). N133 and N194 each carry an N-linked (GlcNAc...) asparagine glycan. 7 disulfide bridges follow: C142/C229, C207/C214, C325/C400, C343/C396, C347/C394, C356/C378, and C358/C370. N-linked (GlcNAc...) asparagine glycans are attached at residues N401 and N428. A discontinuously helical membrane pass occupies residues 461-491; sequence LAGLLGDIGGQMGLFIGASILTILELFDYLY. The GAS motif; ion selectivity filter motif lies at 477–479; that stretch reads GAS. The Cytoplasmic portion of the chain corresponds to 492 to 557; it reads EVIKFKLCRC…GQGNFEDFTC (66 aa).

The protein belongs to the amiloride-sensitive sodium channel (TC 1.A.6) family. ASIC1 subfamily. As to quaternary structure, homotrimer. Heterotrimer; with other ASIC proteins producing channel with different properties. In terms of tissue distribution, expressed in central nervous system.

Its subcellular location is the cell membrane. The protein localises to the postsynaptic cell membrane. The protein resides in the cell projection. It is found in the dendrite. The enzyme catalyses Na(+)(in) = Na(+)(out). It carries out the reaction K(+)(in) = K(+)(out). It catalyses the reaction Li(+)(in) = Li(+)(out). The catalysed reaction is Ca(2+)(in) = Ca(2+)(out). Inhibited by the diuretic drug amiloride. In terms of biological role, forms voltage-independent, pH-gated trimeric sodium channels that act as postsynaptic excitatory receptors in the nervous system, playing a crucial role in regulating synaptic plasticity, learning, and memory. Upon extracellular pH drop this channel elicits transient, fast activating, and completely desensitizing inward currents. Displays high selectivity for sodium ions but can also permit the permeation of other cations. The chain is Acid-sensing ion channel 1B (asic1b) from Danio rerio (Zebrafish).